A 54-amino-acid polypeptide reads, in one-letter code: Ovomucoid (54 aa).

The Kazal-like domain occupies 4–54 (VDCSDHPKPVCSLEYMPLCGSDSKTYSNKCDFCNAVVESNGTLTLSHFGKC). 3 disulfide bridges follow: Cys-6–Cys-36, Cys-14–Cys-33, and Cys-22–Cys-54. Residue Asn-43 is glycosylated (N-linked (GlcNAc...) asparagine).

The protein resides in the secreted. The sequence is that of Ovomucoid from Rhea americana (Greater rhea).